Consider the following 342-residue polypeptide: Aromatic amino acid aminotransferase (342 aa).

The residue at position 214 (Lys214) is an N6-(pyridoxal phosphate)lysine.

This sequence belongs to the class-II pyridoxal-phosphate-dependent aminotransferase family. In terms of assembly, homodimer. Pyridoxal 5'-phosphate is required as a cofactor.

The catalysed reaction is an aromatic L-alpha-amino acid + 2-oxoglutarate = an aromatic oxo-acid + L-glutamate. Aminotransferase that catalyzes the conversion of aromatic amino acids and 2-oxoglutarate into corresponding aromatic oxo acids and L-glutamate. The chain is Aromatic amino acid aminotransferase from Corynebacterium efficiens (strain DSM 44549 / YS-314 / AJ 12310 / JCM 11189 / NBRC 100395).